Reading from the N-terminus, the 449-residue chain is Glucose-6-phosphate isomerase (449 aa).

Glu291 functions as the Proton donor in the catalytic mechanism. Active-site residues include His312 and Lys426.

This sequence belongs to the GPI family.

Its subcellular location is the cytoplasm. It catalyses the reaction alpha-D-glucose 6-phosphate = beta-D-fructose 6-phosphate. It participates in carbohydrate biosynthesis; gluconeogenesis. Its pathway is carbohydrate degradation; glycolysis; D-glyceraldehyde 3-phosphate and glycerone phosphate from D-glucose: step 2/4. Its function is as follows. Catalyzes the reversible isomerization of glucose-6-phosphate to fructose-6-phosphate. The protein is Glucose-6-phosphate isomerase of Streptococcus pyogenes serotype M49 (strain NZ131).